The following is a 390-amino-acid chain: MKFIDEALIRVEAGDGGNGCVSFRREKYIPKGGPDGGDGGDGGDVYLVADENLNTLIDYRFEKRFAAGRGENGRSAGCTGHRGNDITLRVPVGTRAIDNDTKEVLGDLTKHGAKMLVAKGGYHGLGNTRFKSSVNRAPRQKTNGTPGEKRDLQLELMLLADVGMLGLPNAGKSTFIRAVSAAKPKVADYPFTTLVPSLGVVRVDENHSFVVADIPGLIEGAAEGAGLGVRFLKHLERCRVLIHLVDIAPIDESDPAENISIIESELFQYSEALADKPRWLVFNKIDTMSDEEAHERAQAITERLGWDDDYYLISAVTGKNVQPLCRDIMDFIEANPRHEVEQTADEAEVKFKWDDYHQAQLADHQFEDEDEDWDDWSEEDEEGVETIYKP.

In terms of domain architecture, Obg spans 1–159 (MKFIDEALIR…RDLQLELMLL (159 aa)). Positions 160–333 (ADVGMLGLPN…LCRDIMDFIE (174 aa)) constitute an OBG-type G domain. Residues 166–173 (GLPNAGKS), 191–195 (FTTLV), 213–216 (DIPG), 283–286 (NKID), and 314–316 (SAV) contribute to the GTP site. Serine 173 and threonine 193 together coordinate Mg(2+). The segment at 363 to 390 (DHQFEDEDEDWDDWSEEDEEGVETIYKP) is disordered. Positions 366 to 384 (FEDEDEDWDDWSEEDEEGV) are enriched in acidic residues.

This sequence belongs to the TRAFAC class OBG-HflX-like GTPase superfamily. OBG GTPase family. In terms of assembly, monomer. It depends on Mg(2+) as a cofactor.

The protein localises to the cytoplasm. An essential GTPase which binds GTP, GDP and possibly (p)ppGpp with moderate affinity, with high nucleotide exchange rates and a fairly low GTP hydrolysis rate. Plays a role in control of the cell cycle, stress response, ribosome biogenesis and in those bacteria that undergo differentiation, in morphogenesis control. This is GTPase Obg from Pasteurella multocida (strain Pm70).